We begin with the raw amino-acid sequence, 335 residues long: MNKLMLMLITFATSLLAQTNKASTGLKTDQSFNNSLSESVKLKEIADIYPTNTNFLTGIGIVAGLAGKGDSIKQKDLIIKILEENNIINEIGSNNIESKNIALVNVSLQVKGNTIKGSKHKACVASILDSKDLTNGILLKTNLKNKEGEIIAIASGITQPNNKLKGSGYTIDSVIINENQNINHSYNIILKKGNYTLINRIHKILTSKKINNKIKSDSTIEIEAKNISLLEEIENIKIETNPKILIDKKNGIILASENAKIGTFTFSIEKDNQNIFLSKNNKTTIQVNSMKLNEFILKNSNNLSNKELIQIIQAAQKINKLNGELILEEIDGNQN.

A signal peptide spans 1–17 (MNKLMLMLITFATSLLA).

It belongs to the FlgI family. The basal body constitutes a major portion of the flagellar organelle and consists of four rings (L,P,S, and M) mounted on a central rod.

It is found in the periplasm. Its subcellular location is the bacterial flagellum basal body. Its function is as follows. Assembles around the rod to form the L-ring and probably protects the motor/basal body from shearing forces during rotation. This Borreliella burgdorferi (strain ATCC 35210 / DSM 4680 / CIP 102532 / B31) (Borrelia burgdorferi) protein is Flagellar P-ring protein (flgI).